The chain runs to 240 residues: 1-acyl-sn-glycerol-3-phosphate acyltransferase (240 aa).

Residues 73–78 carry the HXXXXD motif motif; it reads HQNNYD.

Belongs to the 1-acyl-sn-glycerol-3-phosphate acyltransferase family.

It is found in the cell inner membrane. It catalyses the reaction a 1-acyl-sn-glycero-3-phosphate + an acyl-CoA = a 1,2-diacyl-sn-glycero-3-phosphate + CoA. It participates in phospholipid metabolism; CDP-diacylglycerol biosynthesis; CDP-diacylglycerol from sn-glycerol 3-phosphate: step 2/3. In terms of biological role, converts lysophosphatidic acid (LPA) into phosphatidic acid by incorporating acyl moiety at the 2 position. This chain is 1-acyl-sn-glycerol-3-phosphate acyltransferase (plsC), found in Haemophilus influenzae (strain ATCC 51907 / DSM 11121 / KW20 / Rd).